The following is a 283-amino-acid chain: Lolitrem B biosynthesis cluster protein S (283 aa).

The first 27 residues, 1-27 (MSRSDWIFISLQGFFCLAGVIWKSREG), serve as a signal peptide directing secretion. Transmembrane regions (helical) follow at residues 73 to 93 (WFWL…LIIL), 112 to 132 (LGYL…SLWI), 157 to 177 (IFWC…VATL), 219 to 239 (MTGT…ALEA), and 250 to 270 (VRMF…DVLL).

This sequence belongs to the ltmS family.

The protein localises to the membrane. Its function is as follows. Part of the gene cluster that mediates the biosynthesis of lolitrems, indole-diterpene mycotoxins that are potent tremorgens in mammals, and are synthesized by clavicipitaceous fungal endophytes in association with their grass hosts. The geranylgeranyl diphosphate (GGPP) synthase ltmG is proposed to catalyze the first step in lolitrem biosynthesis. LtmG catalyzes a series of iterative condensations of isopentenyl diphosphate (IPP) with dimethylallyl diphosphate (DMAPP), geranyl diphosphate (GPP), and farnesyl diphosphate (FPP), to form GGPP. GGPP then condenses with indole-3-glycerol phosphate to form 3-geranylgeranylindole, an acyclic intermediate, to be incorporated into paxilline. Either ltmG or ltmC could be responsible for this step, as both are putative prenyl transferases. The FAD-dependent monooxygenase ltmM then catalyzes the epoxidation of the two terminal alkenes of the geranylgeranyl moiety, which is subsequently cyclized by ltmB, to paspaline. The cytochrome P450 monooxygenases ltmQ and ltmP can sequentially oxidize paspaline to terpendole E and terpendole F. Alternatively, ltmP converts paspaline to an intermediate which is oxidized by ltmQ to terpendole F. LtmF, ltmK, ltmE and ltmJ appear to be unique to the epichloe endophytes. The prenyltransferase ltmF is involved in the 27-hydroxyl-O-prenylation. The cytochrome P450 monooxygenase ltmK is required for the oxidative acetal ring formation. The multi-functional prenyltransferase ltmE is required for C20- and C21-prenylations of the indole ring of paspalanes and acts together with the cytochrome P450 monooxygenase ltmJ to yield lolitremanes by multiple oxidations and ring closures. The stereoisomer pairs of lolitriol and lolitrem N or lolitrem B and lolitrem F may be attributed to variations in the way in which ring closure can occur under the action of ltmJ. While the major product of this pathway is lolitrem B, the prenyl transferases and cytochrome P450 monooxygenases identified in this pathway have a remarkable versatility in their regio- and stereo-specificities to generate a diverse range of metabolites that are products of a metabolic grid rather than a linear pathway. This is Lolitrem B biosynthesis cluster protein S from Epichloe festucae (strain Fl1).